Consider the following 435-residue polypeptide: Trigger factor (435 aa).

Residues 161–246 (GDKLTLDFTG…IHKTEGPILP (86 aa)) enclose the PPIase FKBP-type domain.

Belongs to the FKBP-type PPIase family. Tig subfamily.

It is found in the cytoplasm. It catalyses the reaction [protein]-peptidylproline (omega=180) = [protein]-peptidylproline (omega=0). Functionally, involved in protein export. Acts as a chaperone by maintaining the newly synthesized protein in an open conformation. Functions as a peptidyl-prolyl cis-trans isomerase. The chain is Trigger factor from Colwellia psychrerythraea (strain 34H / ATCC BAA-681) (Vibrio psychroerythus).